The primary structure comprises 404 residues: Diaminopropionate ammonia-lyase (404 aa).

An N6-(pyridoxal phosphate)lysine modification is found at Lys78.

The protein belongs to the diaminopropionate ammonia-lyase family. In terms of assembly, homodimer. Pyridoxal 5'-phosphate is required as a cofactor.

The catalysed reaction is (S)-2,3-diaminopropanoate + H2O + H(+) = pyruvate + 2 NH4(+). It catalyses the reaction (R)-2,3-diaminopropanoate + H2O + H(+) = pyruvate + 2 NH4(+). Competitively inhibited by L- and D-alanine. Functionally, catalyzes the alpha,beta-elimination reaction of both L- and D-alpha,beta-diaminopropionate (DAP) to form pyruvate and ammonia. In vitro L- and D-isomers of serine are also degraded, though slowly; it is the only serine dehydratase which can eliminate an amino group at the beta-carbon position. In vivo L-, D- and a mixure of DL-DAP allow growth. DL-DAP is toxic in the absence of this enzyme, it may inhibit enzymes involved in the synthesis of pyruvate and aspartate, as well as amino acids derived from them. In Salmonella typhimurium (strain LT2 / SGSC1412 / ATCC 700720), this protein is Diaminopropionate ammonia-lyase (dpaL).